A 429-amino-acid chain; its full sequence is Enolase (429 aa).

A (2R)-2-phosphoglycerate-binding site is contributed by Gln-165. Glu-207 functions as the Proton donor in the catalytic mechanism. 3 residues coordinate Mg(2+): Asp-244, Glu-287, and Asp-314. Residues Lys-339, Arg-368, Ser-369, and Lys-390 each contribute to the (2R)-2-phosphoglycerate site. Catalysis depends on Lys-339, which acts as the Proton acceptor.

Belongs to the enolase family. Mg(2+) is required as a cofactor.

It is found in the cytoplasm. The protein localises to the secreted. The protein resides in the cell surface. The catalysed reaction is (2R)-2-phosphoglycerate = phosphoenolpyruvate + H2O. Its pathway is carbohydrate degradation; glycolysis; pyruvate from D-glyceraldehyde 3-phosphate: step 4/5. Catalyzes the reversible conversion of 2-phosphoglycerate (2-PG) into phosphoenolpyruvate (PEP). It is essential for the degradation of carbohydrates via glycolysis. This Roseiflexus castenholzii (strain DSM 13941 / HLO8) protein is Enolase.